Here is a 62-residue protein sequence, read N- to C-terminus: uncharacterized protein (62 aa).

Residues 37 to 57 form a helical membrane-spanning segment; the sequence is FILGVILLGVIIESITLLVVY.

It is found in the membrane. This is an uncharacterized protein from Dictyostelium discoideum (Social amoeba).